The following is a 310-amino-acid chain: Beta-ketoacyl-[acyl-carrier-protein] synthase III 1 (310 aa).

Residues cysteine 112 and histidine 235 contribute to the active site. Residues 236 to 240 are ACP-binding; the sequence is QANIR. Asparagine 265 is a catalytic residue.

The protein belongs to the thiolase-like superfamily. FabH family. Homodimer.

The protein localises to the cytoplasm. It carries out the reaction malonyl-[ACP] + acetyl-CoA + H(+) = 3-oxobutanoyl-[ACP] + CO2 + CoA. Its pathway is lipid metabolism; fatty acid biosynthesis. Its function is as follows. Catalyzes the condensation reaction of fatty acid synthesis by the addition to an acyl acceptor of two carbons from malonyl-ACP. Catalyzes the first condensation reaction which initiates fatty acid synthesis and may therefore play a role in governing the total rate of fatty acid production. Possesses both acetoacetyl-ACP synthase and acetyl transacylase activities. Its substrate specificity determines the biosynthesis of branched-chain and/or straight-chain of fatty acids. The sequence is that of Beta-ketoacyl-[acyl-carrier-protein] synthase III 1 from Bacillus cereus (strain ATCC 14579 / DSM 31 / CCUG 7414 / JCM 2152 / NBRC 15305 / NCIMB 9373 / NCTC 2599 / NRRL B-3711).